The chain runs to 498 residues: ATP synthase subunit beta, chloroplastic (498 aa).

172–179 (GGAGVGKT) is a binding site for ATP.

It belongs to the ATPase alpha/beta chains family. As to quaternary structure, F-type ATPases have 2 components, CF(1) - the catalytic core - and CF(0) - the membrane proton channel. CF(1) has five subunits: alpha(3), beta(3), gamma(1), delta(1), epsilon(1). CF(0) has four main subunits: a(1), b(1), b'(1) and c(9-12).

The protein resides in the plastid. It localises to the chloroplast thylakoid membrane. It catalyses the reaction ATP + H2O + 4 H(+)(in) = ADP + phosphate + 5 H(+)(out). Its function is as follows. Produces ATP from ADP in the presence of a proton gradient across the membrane. The catalytic sites are hosted primarily by the beta subunits. This chain is ATP synthase subunit beta, chloroplastic, found in Lemna minor (Common duckweed).